The following is a 401-amino-acid chain: Phosphoglycerate kinase (401 aa).

Residues 20–22 (DFN), R35, 58–61 (HLGR), R117, and R154 each bind substrate. ATP-binding positions include K204, G298, E329, and 358–361 (GGDS).

It belongs to the phosphoglycerate kinase family. Monomer.

Its subcellular location is the cytoplasm. It catalyses the reaction (2R)-3-phosphoglycerate + ATP = (2R)-3-phospho-glyceroyl phosphate + ADP. It functions in the pathway carbohydrate degradation; glycolysis; pyruvate from D-glyceraldehyde 3-phosphate: step 2/5. The sequence is that of Phosphoglycerate kinase from Bifidobacterium adolescentis (strain ATCC 15703 / DSM 20083 / NCTC 11814 / E194a).